The primary structure comprises 470 residues: Uronate isomerase (470 aa).

This sequence belongs to the metallo-dependent hydrolases superfamily. Uronate isomerase family.

It carries out the reaction D-glucuronate = D-fructuronate. The enzyme catalyses aldehydo-D-galacturonate = keto-D-tagaturonate. Its pathway is carbohydrate metabolism; pentose and glucuronate interconversion. This chain is Uronate isomerase, found in Escherichia fergusonii (strain ATCC 35469 / DSM 13698 / CCUG 18766 / IAM 14443 / JCM 21226 / LMG 7866 / NBRC 102419 / NCTC 12128 / CDC 0568-73).